A 105-amino-acid polypeptide reads, in one-letter code: Replication restart protein PriB (105 aa).

Residues 1 to 102 (MTTNRLVLSG…LHAEQIEFID (102 aa)) enclose the SSB domain.

This sequence belongs to the PriB family. As to quaternary structure, homodimer. Interacts with PriA and DnaT. Component of the replication restart primosome. Primosome assembly occurs via a 'hand-off' mechanism. PriA binds to replication forks, subsequently PriB then DnaT bind; DnaT then displaces ssDNA to generate the helicase loading substrate.

Involved in the restart of stalled replication forks, which reloads the replicative helicase on sites other than the origin of replication; the PriA-PriB pathway is the major replication restart pathway. During primosome assembly it facilitates complex formation between PriA and DnaT on DNA; stabilizes PriA on DNA. Stimulates the DNA unwinding activity of PriA helicase. This Yersinia pseudotuberculosis serotype O:1b (strain IP 31758) protein is Replication restart protein PriB.